Reading from the N-terminus, the 304-residue chain is Cytochrome c biogenesis protein CcsA (304 aa).

8 helical membrane-spanning segments follow: residues Leu8–Phe28, Pro37–Leu57, Gly63–Leu83, Ile96–Leu116, Val141–Val161, Thr212–Asn232, Thr246–Leu263, and Val275–Ile295.

This sequence belongs to the CcmF/CycK/Ccl1/NrfE/CcsA family. In terms of assembly, may interact with ccs1.

It is found in the cellular thylakoid membrane. Its function is as follows. Required during biogenesis of c-type cytochromes (cytochrome c6 and cytochrome f) at the step of heme attachment. This Synechococcus sp. (strain CC9902) protein is Cytochrome c biogenesis protein CcsA.